The sequence spans 502 residues: 4,4'-diapophytoene desaturase (4,4'-diaponeurosporene-forming) (502 aa).

5 to 17 is an FAD binding site; the sequence is VIGAGVTGLAAAA.

It belongs to the carotenoid/retinoid oxidoreductase family. CrtN subfamily.

It catalyses the reaction 15-cis-4,4'-diapophytoene + 3 FAD + 3 H(+) = all-trans-4,4'-diaponeurosporene + 3 FADH2. Its pathway is carotenoid biosynthesis; staphyloxanthin biosynthesis; staphyloxanthin from farnesyl diphosphate: step 2/5. In terms of biological role, involved in the biosynthesis of the yellow-orange carotenoid staphyloxanthin, which plays a role in the virulence via its protective function against oxidative stress. Catalyzes three successive dehydrogenation reactions that lead to the introduction of three double bonds into 4,4'-diapophytoene (dehydrosqualene), with 4,4'-diapophytofluene and 4,4'-diapo-zeta-carotene as intermediates, and 4,4'-diaponeurosporene (the major deep-yellow pigment in staphylococci strains) as the end product. This is 4,4'-diapophytoene desaturase (4,4'-diaponeurosporene-forming) from Staphylococcus aureus (strain USA300).